The sequence spans 146 residues: 3-dehydroquinate dehydratase (146 aa).

Tyr-23 serves as the catalytic Proton acceptor. The substrate site is built by Asn-74, His-80, and Asp-87. The active-site Proton donor is His-100. Substrate contacts are provided by residues 101–102 (IS) and Arg-111.

It belongs to the type-II 3-dehydroquinase family. In terms of assembly, homododecamer.

It catalyses the reaction 3-dehydroquinate = 3-dehydroshikimate + H2O. It functions in the pathway metabolic intermediate biosynthesis; chorismate biosynthesis; chorismate from D-erythrose 4-phosphate and phosphoenolpyruvate: step 3/7. Catalyzes a trans-dehydration via an enolate intermediate. The chain is 3-dehydroquinate dehydratase from Bacillus cereus (strain ATCC 10987 / NRS 248).